Consider the following 883-residue polypeptide: Alanine--tRNA ligase (883 aa).

Zn(2+) contacts are provided by histidine 564, histidine 568, cysteine 666, and histidine 670.

Belongs to the class-II aminoacyl-tRNA synthetase family. The cofactor is Zn(2+).

The protein resides in the cytoplasm. The enzyme catalyses tRNA(Ala) + L-alanine + ATP = L-alanyl-tRNA(Ala) + AMP + diphosphate. Its function is as follows. Catalyzes the attachment of alanine to tRNA(Ala) in a two-step reaction: alanine is first activated by ATP to form Ala-AMP and then transferred to the acceptor end of tRNA(Ala). Also edits incorrectly charged Ser-tRNA(Ala) and Gly-tRNA(Ala) via its editing domain. This Synechococcus sp. (strain JA-3-3Ab) (Cyanobacteria bacterium Yellowstone A-Prime) protein is Alanine--tRNA ligase.